We begin with the raw amino-acid sequence, 245 residues long: MPRYKLTIEYDGGPFCGWQYQDNGPSVQGALEAAVKAICGDAVRVHGAGRTDAGVHALAQVAHCDIAKHFAPNRLRDGLNAHLRPHPIGVLTAEIVPDTFEARFSALRRHYVYRIANRRANLAIDVGHVWRVPRPLDTLAMHAAAQRLIGKHDFTTFRDTECQAKSPEKTLDQLDVVRNGDTVTIVTSARSFLHSQVRSMVGSLVWVGHGRWSADDLSNALAERRREACGPVAPPDGLYLVRVDY.

Aspartate 52 functions as the Nucleophile in the catalytic mechanism. Tyrosine 111 is a binding site for substrate.

Belongs to the tRNA pseudouridine synthase TruA family. In terms of assembly, homodimer.

It catalyses the reaction uridine(38/39/40) in tRNA = pseudouridine(38/39/40) in tRNA. In terms of biological role, formation of pseudouridine at positions 38, 39 and 40 in the anticodon stem and loop of transfer RNAs. The polypeptide is tRNA pseudouridine synthase A (Nitrobacter hamburgensis (strain DSM 10229 / NCIMB 13809 / X14)).